Consider the following 461-residue polypeptide: V-type ATP synthase beta chain (461 aa).

This sequence belongs to the ATPase alpha/beta chains family.

Produces ATP from ADP in the presence of a proton gradient across the membrane. The V-type beta chain is a regulatory subunit. The polypeptide is V-type ATP synthase beta chain (Clostridium botulinum (strain ATCC 19397 / Type A)).